We begin with the raw amino-acid sequence, 338 residues long: Ketol-acid reductoisomerase (NADP(+)) (338 aa).

One can recognise a KARI N-terminal Rossmann domain in the interval methionine 1 to threonine 181. Residues tyrosine 24–glutamine 27, arginine 47, serine 50, serine 52, and aspartate 82–glutamine 85 contribute to the NADP(+) site. Histidine 107 is a catalytic residue. Glycine 133 is a binding site for NADP(+). A KARI C-terminal knotted domain is found at threonine 182–isoleucine 327. Residues aspartate 190, glutamate 194, glutamate 226, and glutamate 230 each contribute to the Mg(2+) site. A substrate-binding site is contributed by serine 251.

It belongs to the ketol-acid reductoisomerase family. Mg(2+) is required as a cofactor.

The catalysed reaction is (2R)-2,3-dihydroxy-3-methylbutanoate + NADP(+) = (2S)-2-acetolactate + NADPH + H(+). It catalyses the reaction (2R,3R)-2,3-dihydroxy-3-methylpentanoate + NADP(+) = (S)-2-ethyl-2-hydroxy-3-oxobutanoate + NADPH + H(+). Its pathway is amino-acid biosynthesis; L-isoleucine biosynthesis; L-isoleucine from 2-oxobutanoate: step 2/4. It functions in the pathway amino-acid biosynthesis; L-valine biosynthesis; L-valine from pyruvate: step 2/4. Its function is as follows. Involved in the biosynthesis of branched-chain amino acids (BCAA). Catalyzes an alkyl-migration followed by a ketol-acid reduction of (S)-2-acetolactate (S2AL) to yield (R)-2,3-dihydroxy-isovalerate. In the isomerase reaction, S2AL is rearranged via a Mg-dependent methyl migration to produce 3-hydroxy-3-methyl-2-ketobutyrate (HMKB). In the reductase reaction, this 2-ketoacid undergoes a metal-dependent reduction by NADPH to yield (R)-2,3-dihydroxy-isovalerate. The chain is Ketol-acid reductoisomerase (NADP(+)) from Methylococcus capsulatus (strain ATCC 33009 / NCIMB 11132 / Bath).